Reading from the N-terminus, the 99-residue chain is U8-agatoxin-Ao1a (99 aa).

A signal peptide spans 1 to 19 (MKSLLFVTIAVYFVAQAVT). Positions 20–45 (ANLLSNFLGSSLIDDDKGNMHKLYKR) are excised as a propeptide.

It belongs to the neurotoxin 02 (plectoxin) family. Post-translationally, contains 5 disulfide bonds. As to expression, expressed by the venom gland.

Its subcellular location is the secreted. The protein is U8-agatoxin-Ao1a of Agelena orientalis (Funnel-web spider).